Reading from the N-terminus, the 507-residue chain is MEEFQGYLELYRSWQDNFLYPLILQESIYALVHNQDLGLNGSILLSKKKGYDTKYSLLVVKRLVIRMYQQNFVILSLNDSNKNEFFVPNKNLYSQRISEGFAVLAEIPFSMRVMSSLKGKERKQYQNLRSIHSIFPFLEDKFSRLNHVLDILIPHPVHTKILVQTIRYCVKDISCLHLLQLLLYEYCNNGITLKGSVSNLSKNKNQRFLLFLYNSYVCECESIFVFLRNQSSHLRSTSYGAFLARVYFYLKLEHFLKVFTKHFRVILQFFKDPFMHYVRYQGKWILASRGTFLLMTKLKYYFVNFWQCNFYLWLQTRRIYINKSLNQPIDFIGFLLSVRLNPSVVRSQMLENSFLIYNGIKKFETLVPTMSLIGSLAKAKFCNVLGHPISKPAWADLSDSDIIRRFGRMCRNLSHYYSGSSKKGGLYRIKYILRLSCARTLARKHKSTVRAFMKRLGSEFFEEFFFKEEKVISLILSRDSSISRRLYRGPIWYFDIFCIHDLASHND.

Belongs to the intron maturase 2 family. MatK subfamily.

It localises to the plastid. Its subcellular location is the chloroplast. Usually encoded in the trnK tRNA gene intron. Probably assists in splicing its own and other chloroplast group II introns. This chain is Maturase K, found in Fagopyrum tataricum (Tartarian buckwheat).